An 81-amino-acid chain; its full sequence is Protein RADIALIS-like 3 (81 aa).

One can recognise an SANT domain in the interval 7–62 (SSSASWTRKENKLFERALATYDQDTPDRWHNVARAVGGKSAEEVRRHYELLIRDVN).

As to expression, expressed just outside the vascular bundles in the rosette stem and the leaf traces. Not detected in floral primordia.

Its subcellular location is the nucleus. Functionally, probable transcription factor. The polypeptide is Protein RADIALIS-like 3 (RL3) (Arabidopsis thaliana (Mouse-ear cress)).